Here is a 299-residue protein sequence, read N- to C-terminus: Acetaldehyde dehydrogenase 2 (299 aa).

Cys130 (acyl-thioester intermediate) is an active-site residue. NAD(+) is bound by residues Ser161 to Asn169 and Asn272.

This sequence belongs to the acetaldehyde dehydrogenase family.

It catalyses the reaction acetaldehyde + NAD(+) + CoA = acetyl-CoA + NADH + H(+). The chain is Acetaldehyde dehydrogenase 2 from Burkholderia lata (strain ATCC 17760 / DSM 23089 / LMG 22485 / NCIMB 9086 / R18194 / 383).